Here is a 265-residue protein sequence, read N- to C-terminus: Apolipoprotein A-I (265 aa).

The N-terminal stretch at 1-18 (MKAVVLTLAVLFLTGSQA) is a signal peptide. 2 repeat units span residues 67–88 (LKLL…EQLG) and 89–110 (PVTR…QEMN). Positions 67-265 (LKLLDNWDSL…DEASKKLNAQ (199 aa)) are 10 X approximate tandem repeats. Residue methionine 109 is modified to Methionine sulfoxide. One copy of the 3; half-length repeat lies at 111 to 121 (KDLQEVKQKVQ). 5 repeat units span residues 122–142 (PYLD…RQKV), 144–165 (PLGE…DKLT), 166–187 (PLAE…QQLA), 188–209 (PYSD…EGGG), and 210–230 (SLVQ…EKAK). The stretch at 231–241 (PALEDLRQGLL) is one 9; half-length repeat. Repeat 10 spans residues 242–265 (PVLENLKVSILAAIDEASKKLNAQ).

It belongs to the apolipoprotein A1/A4/E family. As to quaternary structure, homodimer. Interacts with APOA1BP and CLU. Component of a sperm activating protein complex (SPAP), consisting of APOA1, an immunoglobulin heavy chain, an immunoglobulin light chain and albumin. Interacts with NDRG1. Interacts with SCGB3A2. Interacts with NAXE and YJEFN3. Glycosylated. Post-translationally, palmitoylated. In terms of processing, phosphorylation sites are present in the extracellular medium. As to expression, major protein of plasma HDL, also found in chylomicrons.

It localises to the secreted. Functionally, participates in the reverse transport of cholesterol from tissues to the liver for excretion by promoting cholesterol efflux from tissues and by acting as a cofactor for the lecithin cholesterol acyltransferase (LCAT). As part of the SPAP complex, activates spermatozoa motility. This is Apolipoprotein A-I (APOA1) from Balaenoptera acutorostrata scammoni (North Pacific minke whale).